The primary structure comprises 444 residues: Argininosuccinate synthase (444 aa).

Residues 17 to 25 and Ala-43 contribute to the ATP site; that span reads AFSGGLDTS. Tyr-99 provides a ligand contact to L-citrulline. ATP contacts are provided by Gly-129 and Thr-131. L-aspartate-binding residues include Thr-131, Asn-135, and Asp-136. Residue Asn-135 coordinates L-citrulline. Residue Asp-136 coordinates ATP. Arg-139 and Ser-192 together coordinate L-citrulline. ATP is bound at residue Asp-194. L-citrulline contacts are provided by Thr-201, Glu-203, and Glu-280.

Belongs to the argininosuccinate synthase family. Type 2 subfamily. In terms of assembly, homotetramer.

It is found in the cytoplasm. The catalysed reaction is L-citrulline + L-aspartate + ATP = 2-(N(omega)-L-arginino)succinate + AMP + diphosphate + H(+). It functions in the pathway amino-acid biosynthesis; L-arginine biosynthesis; L-arginine from L-ornithine and carbamoyl phosphate: step 2/3. The polypeptide is Argininosuccinate synthase (Paraburkholderia phymatum (strain DSM 17167 / CIP 108236 / LMG 21445 / STM815) (Burkholderia phymatum)).